Here is a 306-residue protein sequence, read N- to C-terminus: MATH domain and coiled-coil domain-containing protein At3g29580 (306 aa).

The region spanning aspartate 6 to phenylalanine 132 is the MATH domain. Positions phenylalanine 253–alanine 298 form a coiled coil.

This Arabidopsis thaliana (Mouse-ear cress) protein is MATH domain and coiled-coil domain-containing protein At3g29580.